The following is a 354-amino-acid chain: UPF0597 protein PPA0217 (354 aa).

The protein belongs to the UPF0597 family.

The polypeptide is UPF0597 protein PPA0217 (Cutibacterium acnes (strain DSM 16379 / KPA171202) (Propionibacterium acnes)).